The chain runs to 379 residues: Flagellar P-ring protein (379 aa).

Positions Met1–Ala32 are cleaved as a signal peptide.

Belongs to the FlgI family. As to quaternary structure, the basal body constitutes a major portion of the flagellar organelle and consists of four rings (L,P,S, and M) mounted on a central rod.

The protein localises to the periplasm. It is found in the bacterial flagellum basal body. Assembles around the rod to form the L-ring and probably protects the motor/basal body from shearing forces during rotation. The sequence is that of Flagellar P-ring protein from Rhodospirillum rubrum (strain ATCC 11170 / ATH 1.1.1 / DSM 467 / LMG 4362 / NCIMB 8255 / S1).